Here is a 463-residue protein sequence, read N- to C-terminus: A-type ATP synthase subunit B (463 aa).

It belongs to the ATPase alpha/beta chains family. As to quaternary structure, has multiple subunits with at least A(3), B(3), C, D, E, F, H, I and proteolipid K(x).

The protein localises to the cell membrane. Component of the A-type ATP synthase that produces ATP from ADP in the presence of a proton gradient across the membrane. The B chain is a regulatory subunit. This is A-type ATP synthase subunit B from Thermococcus sp. (strain KI).